A 95-amino-acid chain; its full sequence is Large ribosomal subunit protein uL23 (95 aa).

The protein belongs to the universal ribosomal protein uL23 family. Part of the 50S ribosomal subunit. Contacts protein L29, and trigger factor when it is bound to the ribosome.

One of the early assembly proteins it binds 23S rRNA. One of the proteins that surrounds the polypeptide exit tunnel on the outside of the ribosome. Forms the main docking site for trigger factor binding to the ribosome. This is Large ribosomal subunit protein uL23 from Thermodesulfovibrio yellowstonii (strain ATCC 51303 / DSM 11347 / YP87).